The primary structure comprises 487 residues: NADH-quinone oxidoreductase subunit N (487 aa).

The next 13 membrane-spanning stretches (helical) occupy residues 9–29, 38–58, 73–93, 108–128, 161–181, 208–228, 240–260, 277–297, 306–326, 328–348, 374–394, 408–430, and 452–472; these read PVLP…LGVF, VSVL…SLGG, FAGF…AMSL, VLVL…DFIA, FVLG…LYGF, IIAG…AVPF, PTPV…CLLV, VVTF…VVQT, SSIG…TLGI, GVLI…AVIL, AFVM…AGFW, LYTL…LRIV, and LVMA…APLV.

It belongs to the complex I subunit 2 family. As to quaternary structure, NDH-1 is composed of 14 different subunits. Subunits NuoA, H, J, K, L, M, N constitute the membrane sector of the complex.

It localises to the cell inner membrane. The catalysed reaction is a quinone + NADH + 5 H(+)(in) = a quinol + NAD(+) + 4 H(+)(out). Functionally, NDH-1 shuttles electrons from NADH, via FMN and iron-sulfur (Fe-S) centers, to quinones in the respiratory chain. The immediate electron acceptor for the enzyme in this species is believed to be ubiquinone. Couples the redox reaction to proton translocation (for every two electrons transferred, four hydrogen ions are translocated across the cytoplasmic membrane), and thus conserves the redox energy in a proton gradient. This chain is NADH-quinone oxidoreductase subunit N, found in Paramagnetospirillum magneticum (strain ATCC 700264 / AMB-1) (Magnetospirillum magneticum).